A 5207-amino-acid polypeptide reads, in one-letter code: NBPF family member NBPF20 (5207 aa).

Olduvai domains lie at serine 5 to proline 77, serine 80 to aspartate 135, arginine 136 to lysine 228, glutamate 229 to proline 321, serine 324 to aspartate 379, arginine 380 to lysine 472, glutamate 473 to proline 565, serine 568 to aspartate 623, arginine 624 to lysine 716, glutamate 717 to proline 809, serine 812 to aspartate 867, arginine 868 to lysine 960, glutamate 961 to proline 1053, serine 1056 to aspartate 1111, arginine 1112 to lysine 1204, glutamate 1205 to proline 1297, serine 1300 to aspartate 1355, arginine 1356 to lysine 1448, glutamate 1449 to proline 1541, serine 1544 to aspartate 1599, arginine 1600 to lysine 1692, glutamate 1693 to proline 1785, serine 1788 to aspartate 1843, arginine 1844 to lysine 1936, glutamate 1937 to proline 2029, serine 2032 to aspartate 2087, arginine 2088 to lysine 2180, glutamate 2181 to proline 2273, serine 2276 to aspartate 2331, arginine 2332 to lysine 2424, glutamate 2425 to proline 2517, serine 2520 to aspartate 2575, arginine 2576 to lysine 2668, glutamate 2669 to proline 2761, serine 2764 to aspartate 2819, arginine 2820 to lysine 2912, glutamate 2913 to proline 3005, serine 3008 to aspartate 3063, arginine 3064 to lysine 3156, glutamate 3157 to proline 3249, serine 3252 to aspartate 3307, arginine 3308 to lysine 3400, glutamate 3401 to proline 3493, serine 3496 to aspartate 3551, arginine 3552 to lysine 3644, glutamate 3645 to proline 3737, serine 3740 to aspartate 3795, arginine 3796 to lysine 3888, glutamate 3889 to proline 3981, serine 3984 to aspartate 4039, arginine 4040 to lysine 4132, glutamate 4133 to proline 4225, serine 4228 to aspartate 4283, arginine 4284 to lysine 4376, glutamate 4377 to aspartate 4452, arginine 4453 to lysine 4545, glutamate 4546 to aspartate 4621, arginine 4622 to proline 4713, serine 4716 to aspartate 4771, arginine 4772 to lysine 4864, glutamate 4865 to proline 4957, serine 4960 to aspartate 5015, arginine 5016 to lysine 5108, and lysine 5109 to glutamine 5207. 2 disordered regions span residues threonine 137–glutamate 157 and lysine 215–lysine 256. A compositionally biased stretch (basic residues) spans glycine 216–arginine 234. Disordered stretches follow at residues threonine 381 to leucine 403 and lysine 459 to tyrosine 513. Basic residues predominate over residues glycine 460–arginine 478. A compositionally biased stretch (basic and acidic residues) spans leucine 492–proline 502. 2 disordered regions span residues threonine 625–leucine 647 and lysine 703–lysine 744. Over residues glycine 704–arginine 722 the composition is skewed to basic residues. Disordered stretches follow at residues threonine 869 to leucine 891 and lysine 947 to tyrosine 1001. Residues glycine 948–arginine 966 are compositionally biased toward basic residues. Positions leucine 980–proline 990 are enriched in basic and acidic residues. 2 disordered regions span residues threonine 1113–leucine 1135 and lysine 1191–tyrosine 1245. Positions glycine 1192–arginine 1210 are enriched in basic residues. Basic and acidic residues predominate over residues leucine 1224–proline 1234. Disordered regions lie at residues threonine 1357–leucine 1379 and lysine 1435–tyrosine 1489. Basic residues predominate over residues glycine 1436–arginine 1454. The span at leucine 1468 to proline 1478 shows a compositional bias: basic and acidic residues. Disordered regions lie at residues threonine 1601–leucine 1623 and lysine 1679–tyrosine 1733. Over residues glycine 1680–arginine 1698 the composition is skewed to basic residues. Residues leucine 1712–proline 1722 show a composition bias toward basic and acidic residues. Disordered stretches follow at residues threonine 1845 to leucine 1867 and lysine 1923 to lysine 1964. The segment covering glycine 1924 to arginine 1942 has biased composition (basic residues). Disordered stretches follow at residues threonine 2089–leucine 2111 and lysine 2167–lysine 2208. Basic residues predominate over residues glycine 2168–arginine 2186. Disordered stretches follow at residues threonine 2333–leucine 2355 and lysine 2411–lysine 2452. The span at glycine 2412–arginine 2430 shows a compositional bias: basic residues. 2 disordered regions span residues threonine 2577–leucine 2599 and lysine 2655–tyrosine 2709. Positions glycine 2656 to arginine 2674 are enriched in basic residues. Basic and acidic residues predominate over residues leucine 2688–proline 2698. Disordered regions lie at residues threonine 2821 to leucine 2843 and lysine 2899 to tyrosine 2953. Basic residues predominate over residues glycine 2900–arginine 2918. Over residues leucine 2932–proline 2942 the composition is skewed to basic and acidic residues. Disordered stretches follow at residues threonine 3065–leucine 3087 and lysine 3143–tyrosine 3197. The span at glycine 3144–arginine 3162 shows a compositional bias: basic residues. Residues leucine 3176–proline 3186 show a composition bias toward basic and acidic residues. 2 disordered regions span residues threonine 3309–leucine 3331 and lysine 3387–tyrosine 3441. A compositionally biased stretch (basic residues) spans glycine 3388–arginine 3406. The segment covering leucine 3420–proline 3430 has biased composition (basic and acidic residues). Disordered stretches follow at residues threonine 3553–leucine 3575 and lysine 3631–lysine 3672. Residues glycine 3632 to arginine 3650 show a composition bias toward basic residues. 2 disordered regions span residues threonine 3797 to leucine 3819 and lysine 3875 to lysine 3916. Basic residues predominate over residues glycine 3876 to arginine 3894. Disordered stretches follow at residues threonine 4041–leucine 4063 and lysine 4119–lysine 4160. A compositionally biased stretch (basic residues) spans glycine 4120–arginine 4138. Disordered stretches follow at residues threonine 4285–leucine 4307, glutamate 4361–lysine 4404, arginine 4453–glutamate 4474, and glutamate 4530–lysine 4573. Residues glycine 4364–arginine 4382 are compositionally biased toward basic residues. The span at glycine 4533–arginine 4551 shows a compositional bias: basic residues. Disordered stretches follow at residues threonine 4773–glutamate 4793 and lysine 4851–leucine 4889. The span at glycine 4852–arginine 4870 shows a compositional bias: basic residues. 2 disordered regions span residues threonine 5017–glutamate 5037 and lysine 5094–leucine 5128. Residues glycine 5096–arginine 5114 show a composition bias toward basic residues.

This sequence belongs to the NBPF family.

It is found in the cytoplasm. The sequence is that of NBPF family member NBPF20 from Homo sapiens (Human).